The chain runs to 245 residues: TLC domain-containing protein 5 (245 aa).

The next 6 helical transmembrane spans lie at 1–21, 38–58, 75–95, 99–119, 162–182, and 191–211; these read MALALCLQVLCSLCGWLSLYI, LVTFTHGVLSIGLSAYIGFID, VHVLCLTLGYFIFDLGWCVYF, GALMLAHHTLSILGIIMALVL, FLFVALFTGVRIGVGACLLFC, and WFVKAGGVAMYAVSWCFMFSI. Residues 29 to 204 enclose the TLC domain; it reads HRSYEWSCRL…AGGVAMYAVS (176 aa).

Belongs to the TLCD5 family.

It localises to the membrane. The protein is TLC domain-containing protein 5 of Homo sapiens (Human).